The primary structure comprises 101 residues: NAD(P)H-quinone oxidoreductase subunit 4L, chloroplastic (101 aa).

3 consecutive transmembrane segments (helical) span residues 2–22, 32–52, and 61–81; these read ILEH…YGLI, MCLE…SDFF, and IFCI…LAIV.

Belongs to the complex I subunit 4L family. As to quaternary structure, NDH is composed of at least 16 different subunits, 5 of which are encoded in the nucleus.

Its subcellular location is the plastid. It is found in the chloroplast thylakoid membrane. It catalyses the reaction a plastoquinone + NADH + (n+1) H(+)(in) = a plastoquinol + NAD(+) + n H(+)(out). It carries out the reaction a plastoquinone + NADPH + (n+1) H(+)(in) = a plastoquinol + NADP(+) + n H(+)(out). In terms of biological role, NDH shuttles electrons from NAD(P)H:plastoquinone, via FMN and iron-sulfur (Fe-S) centers, to quinones in the photosynthetic chain and possibly in a chloroplast respiratory chain. The immediate electron acceptor for the enzyme in this species is believed to be plastoquinone. Couples the redox reaction to proton translocation, and thus conserves the redox energy in a proton gradient. This chain is NAD(P)H-quinone oxidoreductase subunit 4L, chloroplastic, found in Arabis hirsuta (Hairy rock-cress).